Reading from the N-terminus, the 190-residue chain is Probable E3 ubiquitin-protein ligase RHB1A (190 aa).

The segment at 139–180 (CPICFEDYDVENPRLTTKCEHEFHLSCLLEWIERSDRCPICD) adopts an RING-type; atypical zinc-finger fold.

It catalyses the reaction S-ubiquitinyl-[E2 ubiquitin-conjugating enzyme]-L-cysteine + [acceptor protein]-L-lysine = [E2 ubiquitin-conjugating enzyme]-L-cysteine + N(6)-ubiquitinyl-[acceptor protein]-L-lysine.. The protein operates within protein modification; protein ubiquitination. Its function is as follows. Probable E3 ubiquitin-protein ligase that may possess E3 ubiquitin ligase activity in vitro. This is Probable E3 ubiquitin-protein ligase RHB1A from Arabidopsis thaliana (Mouse-ear cress).